The chain runs to 134 residues: Parvalbumin-like EF-hand-containing protein (134 aa).

EF-hand domains are found at residues 55-90 and 96-131; these read QLDDAIHTAFQSLDKDKSGFIEWNEIKYILSIIPSS and LTDEEAEAMIQAADTHGDGRINYEEFSELIKKEKIP. Ca(2+)-binding residues include aspartate 68, aspartate 70, serine 72, phenylalanine 74, glutamate 76, glutamate 79, aspartate 109, aspartate 113, and glutamate 120.

The protein belongs to the parvalbumin family.

The polypeptide is Parvalbumin-like EF-hand-containing protein (Homo sapiens (Human)).